The chain runs to 311 residues: Chemotaxis protein CheV3 (311 aa).

Residues 13-164 (EIELVDFRIY…LESILDDLKL (152 aa)) form the CheW-like domain. In terms of domain architecture, Response regulatory spans 182 to 308 (EVLFLDDSKT…FTEEISKILD (127 aa)). 4-aspartylphosphate is present on D241.

Plays a role in chemotaxis signal transduction system in order to colonize the host stomach. May act as a phosphate sink to control the flow of phosphate to CheAY. This chain is Chemotaxis protein CheV3, found in Helicobacter pylori (strain ATCC 700392 / 26695) (Campylobacter pylori).